The primary structure comprises 287 residues: UTP--glucose-1-phosphate uridylyltransferase 1 (287 aa).

It belongs to the UDPGP type 2 family.

It carries out the reaction alpha-D-glucose 1-phosphate + UTP + H(+) = UDP-alpha-D-glucose + diphosphate. It functions in the pathway glycolipid metabolism; diglucosyl-diacylglycerol biosynthesis. Its function is as follows. Catalyzes the formation of UDP-glucose from glucose-1-phosphate and UTP. This is an intermediate step in the biosynthesis of diglucosyl-diacylglycerol (Glc2-DAG), i.e. a glycolipid found in the membrane, which is also used as a membrane anchor for lipoteichoic acid (LTA). This chain is UTP--glucose-1-phosphate uridylyltransferase 1 (gtaB1), found in Staphylococcus saprophyticus subsp. saprophyticus (strain ATCC 15305 / DSM 20229 / NCIMB 8711 / NCTC 7292 / S-41).